Here is a 100-residue protein sequence, read N- to C-terminus: Integration host factor subunit alpha (100 aa).

This sequence belongs to the bacterial histone-like protein family. Heterodimer of an alpha and a beta chain.

Its function is as follows. This protein is one of the two subunits of integration host factor, a specific DNA-binding protein that functions in genetic recombination as well as in transcriptional and translational control. This is Integration host factor subunit alpha from Cereibacter sphaeroides (strain ATCC 17023 / DSM 158 / JCM 6121 / CCUG 31486 / LMG 2827 / NBRC 12203 / NCIMB 8253 / ATH 2.4.1.) (Rhodobacter sphaeroides).